The following is a 1918-amino-acid chain: Diacylglycerol kinase eta (1918 aa).

The span at 1-10 shows a compositional bias: basic and acidic residues; sequence MAHLKLDTLH. Positions 1 to 37 are disordered; the sequence is MAHLKLDTLHVQRSPRGSRRSSPSSGRSSACSSGSIS. Positions 20–37 are enriched in low complexity; the sequence is RSSPSSGRSSACSSGSIS. The 94-residue stretch at 82–175 folds into the PH domain; sequence AIIKEGFLLK…WLGGLKTATA (94 aa). Phorbol-ester/DAG-type zinc fingers lie at residues 195–245 and 268–319; these read HHHW…IANC and PHQW…AVAC. The DAGKc domain maps to 350-486; that stretch reads GNFSPLLVFV…DRWSIMVFEK (137 aa). Disordered regions lie at residues 783 to 805, 1017 to 1067, 1177 to 1212, and 1380 to 1399; these read GANI…NTPT, TTLC…DDNP, PNTI…GDSI, and ERDK…TEEA. Polar residues predominate over residues 1177–1189; the sequence is PNTILTTSTSPTK. Residues 1855 to 1918 enclose the SAM domain; sequence WSVNEVVTWL…LQAIKDLSEN (64 aa).

Belongs to the eukaryotic diacylglycerol kinase family.

It is found in the cytoplasm. The catalysed reaction is a 1,2-diacyl-sn-glycerol + ATP = a 1,2-diacyl-sn-glycero-3-phosphate + ADP + H(+). Its function is as follows. Phosphorylates diacylglycerol (DAG) to generate phosphatidic acid (PA). This is Diacylglycerol kinase eta from Drosophila erecta (Fruit fly).